The following is a 489-amino-acid chain: Aspartyl/glutamyl-tRNA(Asn/Gln) amidotransferase subunit B (489 aa).

It belongs to the GatB/GatE family. GatB subfamily. In terms of assembly, heterotrimer of A, B and C subunits.

It catalyses the reaction L-glutamyl-tRNA(Gln) + L-glutamine + ATP + H2O = L-glutaminyl-tRNA(Gln) + L-glutamate + ADP + phosphate + H(+). The catalysed reaction is L-aspartyl-tRNA(Asn) + L-glutamine + ATP + H2O = L-asparaginyl-tRNA(Asn) + L-glutamate + ADP + phosphate + 2 H(+). Allows the formation of correctly charged Asn-tRNA(Asn) or Gln-tRNA(Gln) through the transamidation of misacylated Asp-tRNA(Asn) or Glu-tRNA(Gln) in organisms which lack either or both of asparaginyl-tRNA or glutaminyl-tRNA synthetases. The reaction takes place in the presence of glutamine and ATP through an activated phospho-Asp-tRNA(Asn) or phospho-Glu-tRNA(Gln). The sequence is that of Aspartyl/glutamyl-tRNA(Asn/Gln) amidotransferase subunit B from Polynucleobacter asymbioticus (strain DSM 18221 / CIP 109841 / QLW-P1DMWA-1) (Polynucleobacter necessarius subsp. asymbioticus).